Consider the following 716-residue polypeptide: Forkhead box protein P2 (716 aa).

Positions M1–D28 are enriched in polar residues. Disordered stretches follow at residues M1–S45 and K286–S340. Positions T293–S306 are enriched in low complexity. A compositionally biased stretch (polar residues) spans S316–L325. A compositionally biased stretch (basic and acidic residues) spans A327–G338. A C2H2-type zinc finger spans residues G347–H372. A leucine-zipper region spans residues V389–L410. The CTBP1-binding stretch occupies residues P423–V427. Residues T439–Q460 are compositionally biased toward low complexity. The tract at residues T439–T466 is disordered. Positions R505–L595 form a DNA-binding region, fork-head. 2 disordered regions span residues L650–I669 and V679–E716. The segment covering L700 to E716 has biased composition (acidic residues).

Forms homodimers and heterodimers with FOXP1 and FOXP4. Dimerization is required for DNA-binding. Interacts with CTBP1. Interacts with FOXP1. Interacts with TBR1. Interacts with ZMYM2.

Its subcellular location is the nucleus. In terms of biological role, transcriptional repressor that may play a role in the specification and differentiation of lung epithelium. May also play a role in developing neural, gastrointestinal and cardiovascular tissues. Can act with CTBP1 to synergistically repress transcription but CTPBP1 is not essential. Plays a role in synapse formation by regulating SRPX2 levels. This is Forkhead box protein P2 (FOXP2) from Pan paniscus (Pygmy chimpanzee).